Reading from the N-terminus, the 172-residue chain is 6,7-dimethyl-8-ribityllumazine synthase (172 aa).

5-amino-6-(D-ribitylamino)uracil contacts are provided by residues Phe-24, 58 to 60, and 82 to 84; these read ALE and AVI. 87 to 88 provides a ligand contact to (2S)-2-hydroxy-3-oxobutyl phosphate; sequence ET. His-90 serves as the catalytic Proton donor. Asn-115 contacts 5-amino-6-(D-ribitylamino)uracil. A (2S)-2-hydroxy-3-oxobutyl phosphate-binding site is contributed by Arg-129. Residues 150–172 are disordered; it reads ALEQLDGDEDDEGEGEDDEEERA. Residues 154–172 are compositionally biased toward acidic residues; it reads LDGDEDDEGEGEDDEEERA.

Belongs to the DMRL synthase family.

The enzyme catalyses (2S)-2-hydroxy-3-oxobutyl phosphate + 5-amino-6-(D-ribitylamino)uracil = 6,7-dimethyl-8-(1-D-ribityl)lumazine + phosphate + 2 H2O + H(+). Its pathway is cofactor biosynthesis; riboflavin biosynthesis; riboflavin from 2-hydroxy-3-oxobutyl phosphate and 5-amino-6-(D-ribitylamino)uracil: step 1/2. In terms of biological role, catalyzes the formation of 6,7-dimethyl-8-ribityllumazine by condensation of 5-amino-6-(D-ribitylamino)uracil with 3,4-dihydroxy-2-butanone 4-phosphate. This is the penultimate step in the biosynthesis of riboflavin. This Paraburkholderia phymatum (strain DSM 17167 / CIP 108236 / LMG 21445 / STM815) (Burkholderia phymatum) protein is 6,7-dimethyl-8-ribityllumazine synthase.